Reading from the N-terminus, the 185-residue chain is Ribosome-recycling factor (185 aa).

The protein belongs to the RRF family.

Its subcellular location is the cytoplasm. Functionally, responsible for the release of ribosomes from messenger RNA at the termination of protein biosynthesis. May increase the efficiency of translation by recycling ribosomes from one round of translation to another. The polypeptide is Ribosome-recycling factor (Syntrophus aciditrophicus (strain SB)).